Consider the following 340-residue polypeptide: uncharacterized protein (340 aa).

This is an uncharacterized protein from Enterobacteria phage T4 (Bacteriophage T4).